Here is a 107-residue protein sequence, read N- to C-terminus: uncharacterized protein (107 aa).

This is an uncharacterized protein from Pasteurella multocida (strain Pm70).